We begin with the raw amino-acid sequence, 155 residues long: Ribosomal RNA large subunit methyltransferase H (155 aa).

S-adenosyl-L-methionine is bound by residues L73, G104, and 123 to 128 (LSRMTF).

It belongs to the RNA methyltransferase RlmH family. Homodimer.

The protein localises to the cytoplasm. The catalysed reaction is pseudouridine(1915) in 23S rRNA + S-adenosyl-L-methionine = N(3)-methylpseudouridine(1915) in 23S rRNA + S-adenosyl-L-homocysteine + H(+). Functionally, specifically methylates the pseudouridine at position 1915 (m3Psi1915) in 23S rRNA. The protein is Ribosomal RNA large subunit methyltransferase H of Methylococcus capsulatus (strain ATCC 33009 / NCIMB 11132 / Bath).